A 551-amino-acid polypeptide reads, in one-letter code: MFS-type transporter ATEG_00331 (551 aa).

An N-terminal signal peptide occupies residues 1-18 (MKAWLLVSSLCLSTFIAA). Transmembrane regions (helical) follow at residues 40 to 60 (LEFT…TPPW), 71 to 91 (PVLM…ALAI), 102 to 122 (IQGT…GDVF), and 132 to 152 (GVLG…GGAF). Residues asparagine 165 and asparagine 178 are each glycosylated (N-linked (GlcNAc...) asparagine). The next 8 helical transmembrane spans lie at 179 to 199 (LTTS…FLEV), 206 to 228 (IIEG…TVMF), 233 to 255 (GYGG…FGIG), 324 to 344 (VYLL…GLYI), 354 to 374 (IYFG…LQPY), 380 to 400 (IIIF…APII), 417 to 437 (TVFF…GVIF), and 493 to 513 (SEWI…VFIS). N-linked (GlcNAc...) asparagine glycosylation occurs at asparagine 524.

This sequence belongs to the major facilitator superfamily. TCR/Tet family.

The protein localises to the membrane. In terms of biological role, MFS-type transporter; part of the gene cluster that mediates the biosynthesis of isoflavipucine. In Aspergillus terreus (strain NIH 2624 / FGSC A1156), this protein is MFS-type transporter ATEG_00331.